Reading from the N-terminus, the 204-residue chain is Large ribosomal subunit protein uL4 (204 aa).

The tract at residues 49 to 75 (TKGRSDVSGGGKKPWRQKGRGGARAGS) is disordered.

It belongs to the universal ribosomal protein uL4 family. Part of the 50S ribosomal subunit.

One of the primary rRNA binding proteins, this protein initially binds near the 5'-end of the 23S rRNA. It is important during the early stages of 50S assembly. It makes multiple contacts with different domains of the 23S rRNA in the assembled 50S subunit and ribosome. Its function is as follows. Forms part of the polypeptide exit tunnel. In Campylobacter jejuni (strain RM1221), this protein is Large ribosomal subunit protein uL4.